The chain runs to 213 residues: Peptidyl-tRNA hydrolase (213 aa).

Tyrosine 15 serves as a coordination point for tRNA. The Proton acceptor role is filled by histidine 20. Phenylalanine 66, asparagine 68, and asparagine 114 together coordinate tRNA. The tract at residues 187-213 (HTTKPPRPKPPRPAAAPVDAPAAPGDQ) is disordered. The span at 201 to 213 (AAPVDAPAAPGDQ) shows a compositional bias: low complexity.

It belongs to the PTH family. Monomer.

The protein localises to the cytoplasm. The catalysed reaction is an N-acyl-L-alpha-aminoacyl-tRNA + H2O = an N-acyl-L-amino acid + a tRNA + H(+). In terms of biological role, hydrolyzes ribosome-free peptidyl-tRNAs (with 1 or more amino acids incorporated), which drop off the ribosome during protein synthesis, or as a result of ribosome stalling. Functionally, catalyzes the release of premature peptidyl moieties from peptidyl-tRNA molecules trapped in stalled 50S ribosomal subunits, and thus maintains levels of free tRNAs and 50S ribosomes. In Paracidovorax citrulli (strain AAC00-1) (Acidovorax citrulli), this protein is Peptidyl-tRNA hydrolase.